The following is a 360-amino-acid chain: Protein Wnt-2 (360 aa).

An N-terminal signal peptide occupies residues M1–S25. Disulfide bonds link C76–C87, C127–C135, C137–C157, C206–C220, C208–C215, C278–C309, C294–C304, C308–C348, C324–C339, C326–C336, and C331–C332. S212 is lipidated: O-palmitoleoyl serine; by PORCN. The N-linked (GlcNAc...) asparagine glycan is linked to N295.

It belongs to the Wnt family. Palmitoleoylation is required for efficient binding to frizzled receptors. Depalmitoleoylation leads to Wnt signaling pathway inhibition.

It is found in the secreted. Its subcellular location is the extracellular space. It localises to the extracellular matrix. Functionally, ligand for members of the frizzled family of seven transmembrane receptors. Functions in the canonical Wnt signaling pathway that results in activation of transcription factors of the TCF/LEF family. Functions as a upstream regulator of FGF10 expression. Plays an important role in embryonic lung development. May contribute to embryonic brain development by regulating the proliferation of dopaminergic precursors and neurons. This is Protein Wnt-2 (WNT2) from Nomascus leucogenys (Northern white-cheeked gibbon).